The following is a 115-amino-acid chain: Protein VCF2 (115 aa).

A compositionally biased stretch (basic residues) spans 1-12; that stretch reads MGGCPVRKRRRN. The disordered stretch occupies residues 1–70; that stretch reads MGGCPVRKRR…GPEGNLNQIV (70 aa). The span at 33-44 shows a compositional bias: polar residues; sequence FQDSQDTEFSWS.

The protein belongs to the VCF family.

The polypeptide is Protein VCF2 (Homo sapiens (Human)).